Here is a 359-residue protein sequence, read N- to C-terminus: MERLKVELGERSYPIEIAAGLLQHAEVLTQTIKGKRVMIVTNTVVAPLYLERIIQLLSGFQVEHLILPDGEAYKTLATFERIMSALLETNHGRDTTLIALGGGVIGDVVGFAAASYQRGIPFIQVPTTLLSQVDSSVGGKTAVNHPLGKNMIGAFYQPKHVVIDTECLKTLPAREFAAGMAEVIKYGIIWDAEFFSWLETNMSRLQALEPAALAYAIRRCCEIKADVVTQDETEHGVRALLNLGHTFGHAIEAEKGYGNWLHGEAVAAGMMMAASTAEARGDLDARQLARIRDLLLAANLPIQAPADMDFSAFIRHMRRDKKVLEGKLRLVLPVGIGHAQVVADVSDDELLAVIESGRE.

NAD(+) contacts are provided by residues 69-74 (DGEAYK), 103-107 (GVIGD), 127-128 (TT), Lys140, Lys149, and 167-170 (CLKT). The Zn(2+) site is built by Glu182, His245, and His262.

Belongs to the sugar phosphate cyclases superfamily. Dehydroquinate synthase family. Co(2+) is required as a cofactor. Zn(2+) serves as cofactor. It depends on NAD(+) as a cofactor.

It is found in the cytoplasm. It catalyses the reaction 7-phospho-2-dehydro-3-deoxy-D-arabino-heptonate = 3-dehydroquinate + phosphate. It participates in metabolic intermediate biosynthesis; chorismate biosynthesis; chorismate from D-erythrose 4-phosphate and phosphoenolpyruvate: step 2/7. In terms of biological role, catalyzes the conversion of 3-deoxy-D-arabino-heptulosonate 7-phosphate (DAHP) to dehydroquinate (DHQ). The chain is 3-dehydroquinate synthase from Aeromonas salmonicida (strain A449).